Consider the following 214-residue polypeptide: MQAFTQLNGLVAPLDRANVDTDAIIPKQFLKSIKRAGFGPNAFDEWRYLDQGEPGKDNSKRPLNPDFPLNFPRYQGASILLTRENFGCGSSREHAPWALLDYGFRAIIAPSFADIFFNNCFKNGILPIVLDAEIVDSLFKEVEANEGYHLLVDLQSQIVQTPGGRHYAFEIDPFRKHCLLNGLDDIGLTLQHVDEIKAFEARHKAAQPWLFNES.

It belongs to the LeuD family. LeuD type 1 subfamily. Heterodimer of LeuC and LeuD.

It catalyses the reaction (2R,3S)-3-isopropylmalate = (2S)-2-isopropylmalate. The protein operates within amino-acid biosynthesis; L-leucine biosynthesis; L-leucine from 3-methyl-2-oxobutanoate: step 2/4. Its function is as follows. Catalyzes the isomerization between 2-isopropylmalate and 3-isopropylmalate, via the formation of 2-isopropylmaleate. In Methylobacillus flagellatus (strain ATCC 51484 / DSM 6875 / VKM B-1610 / KT), this protein is 3-isopropylmalate dehydratase small subunit.